We begin with the raw amino-acid sequence, 188 residues long: dCTP deaminase (188 aa).

DCTP contacts are provided by residues 111–116 (KSTYAR), 135–137 (TLE), Q156, Y170, K179, and Q180. The active-site Proton donor/acceptor is the E137.

Belongs to the dCTP deaminase family. Homotrimer.

The enzyme catalyses dCTP + H2O + H(+) = dUTP + NH4(+). Its pathway is pyrimidine metabolism; dUMP biosynthesis; dUMP from dCTP (dUTP route): step 1/2. Catalyzes the deamination of dCTP to dUTP. The sequence is that of dCTP deaminase from Rickettsia akari (strain Hartford).